The chain runs to 230 residues: Oxygen-evolving enhancer protein 3-2, chloroplastic (230 aa).

A chloroplast-targeting transit peptide spans M1 to A49. A thylakoid-targeting transit peptide spans Q50–A82. S125 carries the phosphoserine modification. Residue T195 is modified to Phosphothreonine. The residue at position 215 (Y215) is a Phosphotyrosine. Residue S216 is modified to Phosphoserine. T218 carries the post-translational modification Phosphothreonine.

This sequence belongs to the PsbQ family.

The protein localises to the plastid. It is found in the chloroplast thylakoid membrane. Its function is as follows. Required for photosystem II assembly/stability and photoautotrophic growth under low light conditions. The protein is Oxygen-evolving enhancer protein 3-2, chloroplastic (PSBQ2) of Arabidopsis thaliana (Mouse-ear cress).